The primary structure comprises 267 residues: Pro-opiomelanocortin (267 aa).

The first 26 residues, 1-26 (MPRSCCSRSGALLLALLLQASMEVRG), serve as a signal peptide directing secretion. C28 and C50 are oxidised to a cystine. O-linked (HexNAc...) threonine glycosylation occurs at T71. F87 carries the phenylalanine amide modification. Disordered regions lie at residues 88–175 (GRRN…FPLE), 181–200 (TGQRLREGDGPDGPADDGAG), and 222–241 (RMEHFRWGSPPKDKRYGGFM). An N-linked (GlcNAc...) asparagine glycan is attached at N91. The span at 121–145 (PEPRSDGAKPGPREGKRSYSMEHFR) shows a compositional bias: basic and acidic residues. The residue at position 134 (E134) is a Glutamic acid 1-amide. S138 bears the N-acetylserine; in Corticotropin mark. V150 is subject to Valine amide. S168 carries the phosphoserine modification. Positions 222–237 (RMEHFRWGSPPKDKRY) are enriched in basic and acidic residues.

The protein belongs to the POMC family. In terms of processing, specific enzymatic cleavages at paired basic residues yield the different active peptides. Post-translationally, O-glycosylated; reducing sugar is probably N-acetylgalactosamine. ACTH and MSH are produced by the pituitary gland.

Its subcellular location is the secreted. Functionally, stimulates the adrenal glands to release cortisol. Its function is as follows. Anorexigenic peptide. Increases the pigmentation of skin by increasing melanin production in melanocytes. Increases the pigmentation of skin by increasing melanin production in melanocytes. In terms of biological role, endogenous orexigenic opiate. Functionally, endogenous opiate. The chain is Pro-opiomelanocortin (POMC) from Homo sapiens (Human).